A 203-amino-acid chain; its full sequence is Nucleoside triphosphate pyrophosphatase (203 aa).

The active-site Proton acceptor is the Asp-77.

It belongs to the Maf family. Requires a divalent metal cation as cofactor.

It is found in the cytoplasm. The catalysed reaction is a ribonucleoside 5'-triphosphate + H2O = a ribonucleoside 5'-phosphate + diphosphate + H(+). It catalyses the reaction a 2'-deoxyribonucleoside 5'-triphosphate + H2O = a 2'-deoxyribonucleoside 5'-phosphate + diphosphate + H(+). Its function is as follows. Nucleoside triphosphate pyrophosphatase. May have a dual role in cell division arrest and in preventing the incorporation of modified nucleotides into cellular nucleic acids. In Rickettsia felis (strain ATCC VR-1525 / URRWXCal2) (Rickettsia azadi), this protein is Nucleoside triphosphate pyrophosphatase.